A 245-amino-acid polypeptide reads, in one-letter code: Pyridoxine 5'-phosphate synthase (245 aa).

3-amino-2-oxopropyl phosphate is bound at residue Asn-7. 9 to 10 (DH) is a 1-deoxy-D-xylulose 5-phosphate binding site. Residue Arg-18 coordinates 3-amino-2-oxopropyl phosphate. The Proton acceptor role is filled by His-43. 2 residues coordinate 1-deoxy-D-xylulose 5-phosphate: Arg-45 and His-50. Glu-70 serves as the catalytic Proton acceptor. A 1-deoxy-D-xylulose 5-phosphate-binding site is contributed by Thr-100. His-190 acts as the Proton donor in catalysis. 3-amino-2-oxopropyl phosphate is bound by residues Gly-191 and 212-213 (GH).

This sequence belongs to the PNP synthase family. As to quaternary structure, homooctamer; tetramer of dimers.

The protein resides in the cytoplasm. The enzyme catalyses 3-amino-2-oxopropyl phosphate + 1-deoxy-D-xylulose 5-phosphate = pyridoxine 5'-phosphate + phosphate + 2 H2O + H(+). It participates in cofactor biosynthesis; pyridoxine 5'-phosphate biosynthesis; pyridoxine 5'-phosphate from D-erythrose 4-phosphate: step 5/5. In terms of biological role, catalyzes the complicated ring closure reaction between the two acyclic compounds 1-deoxy-D-xylulose-5-phosphate (DXP) and 3-amino-2-oxopropyl phosphate (1-amino-acetone-3-phosphate or AAP) to form pyridoxine 5'-phosphate (PNP) and inorganic phosphate. The polypeptide is Pyridoxine 5'-phosphate synthase (Prochlorococcus marinus (strain MIT 9313)).